The following is a 456-amino-acid chain: Vitamin K-dependent protein C (456 aa).

The N-terminal stretch at 1 to 20 (MWQLASLSLLLTICGTCSTA) is a signal peptide. The propeptide occupies 21–42 (APPGSVFSSSESAHQVLRIRKR). In terms of domain architecture, Gla spans 47-88 (LEEIRAGSLERECMEEICDFEEAKEIFQNVDDTLAYWSKYVD). 9 positions are modified to 4-carboxyglutamate: Glu-48, Glu-49, Glu-56, Glu-58, Glu-61, Glu-62, Glu-67, Glu-68, and Glu-71. Cys-59 and Cys-64 form a disulfide bridge. Disulfide bonds link Cys-92-Cys-111, Cys-101-Cys-106, Cys-105-Cys-120, and Cys-122-Cys-131. EGF-like domains follow at residues 97–132 (PEHACDSPCCGHGSCIDGIGAFHCDCGRGWEGRFCQ) and 136–176 (SYIN…LQCQ). A (3R)-3-hydroxyaspartate modification is found at Asp-113. An N-linked (GlcNAc...) asparagine glycan is attached at Asn-139. Cystine bridges form between Cys-140-Cys-151, Cys-147-Cys-160, Cys-162-Cys-175, Cys-183-Cys-318, and Cys-237-Cys-253. An N-linked (GlcNAc...) asparagine glycan is attached at Asn-202. Residues 211–445 (LVNGKVTRRG…YLDWIHSHIR (235 aa)) enclose the Peptidase S1 domain. The active-site Charge relay system is His-252. Asn-289 carries N-linked (GlcNAc...) asparagine glycosylation. Residue Asp-298 is the Charge relay system of the active site. Asn-350 is a glycosylation site (N-linked (GlcNAc...) asparagine). Intrachain disulfides connect Cys-368/Cys-382 and Cys-393/Cys-421. Residue Ser-397 is the Charge relay system of the active site.

It belongs to the peptidase S1 family. In terms of assembly, synthesized as a single chain precursor, which is cleaved into a light chain and a heavy chain held together by a disulfide bond. The enzyme is then activated by thrombin, which cleaves a tetradecapeptide from the amino end of the heavy chain; this reaction, which occurs at the surface of endothelial cells, is strongly promoted by thrombomodulin. Post-translationally, the vitamin K-dependent, enzymatic carboxylation of some Glu residues allows the modified protein to bind calcium. The iron and 2-oxoglutarate dependent 3-hydroxylation of aspartate and asparagine is (R) stereospecific within EGF domains. Plasma; synthesized in the liver.

Its subcellular location is the secreted. The protein resides in the golgi apparatus. It localises to the endoplasmic reticulum. The catalysed reaction is Degradation of blood coagulation factors Va and VIIIa.. Protein C is a vitamin K-dependent serine protease that regulates blood coagulation by inactivating factors Va and VIIIa in the presence of calcium ions and phospholipids. Exerts a protective effect on the endothelial cell barrier function. The protein is Vitamin K-dependent protein C (PROC) of Canis lupus familiaris (Dog).